A 540-amino-acid polypeptide reads, in one-letter code: MINTILVPVAVAIVSVLVGGCAGYSLRKNKWETQAQNAAHDAKHILADAESKAKAVEADLASQQEAMKKAAADAKKEKILEAQEEIHHYRERVDNELNERRQEVSRQENRLLQREDAIDHKDSLLDQKDSQLTQKENQIKKLQAQVLEKEKRADQLVTEREQKLYEVAELSQEDAKKIVLDKLSDQLVKERAEMIEESNQLAKAKADHFARKVIVDAIQSSAADTVSEKTVSVVNLPNDDMKGRIIGREGRNIRSFEALTGVDVIIDDTPDVVVLSGFDPIRREIAKRALERLIKDGRIHPARIEEMVDRARKEVNDDIYEAGESALMELGIHKMHPELVKILGRLKYRTSYGQNVLSHSIEVGKLTGVMAAELGLDEKIAVRAGLLHDIGKSIDHEIEGSHVEIGVELARKYHEPDLVVNAIAAHHDDVPKLSFIAELVVAADTISSARPGARSESLENYIRRLEQLETIAKGHIGVKQAYAIQAGREIRVMVEPDKISDARTTILAHDIKNQIEQDMEYPGNIKVTVIREKRAVAIAK.

The helical transmembrane segment at 4-24 (TILVPVAVAIVSVLVGGCAGY) threads the bilayer. A KH domain is found at 230–293 (TVSVVNLPND…EIAKRALERL (64 aa)). One can recognise an HD domain in the interval 356-449 (VLSHSIEVGK…VVAADTISSA (94 aa)).

Belongs to the RNase Y family.

The protein localises to the cell membrane. Endoribonuclease that initiates mRNA decay. This chain is Ribonuclease Y, found in Lactobacillus gasseri (strain ATCC 33323 / DSM 20243 / BCRC 14619 / CIP 102991 / JCM 1131 / KCTC 3163 / NCIMB 11718 / NCTC 13722 / AM63).